Reading from the N-terminus, the 895-residue chain is ATFQDKQENSHIENEDKRLMSEQKEIVHFVSEGITPSTTALPDIVNLSTNYLDMTTREDRIHSIKDFLSGPIIIATNLWSSSDPVEKQLYTANFPEVLISNAMYQDKLKGFVGLRATLVVKVQVNSQPFQQGRLMLQYIPYAQYMPNRVTLINETLQGRSGCPTTDLELSVGTEVEMRIPYVSPHLYYNLITGQGSFGSIYVVVYSQLHDQVSGTGSIEYTVWAHLEDVDVQYPTGANIFTGNSPNYLSIAERIATGDFTETEMRKLWIHKTYLKRPARIYAQAAKELKQLETNNSPSTALGQISEGLTTLSHIPVLGNIFSTPAWISAKAADLAKLFGFSKPTVQGKIGECKLRGQGRMANFDGMDMSHKMALSSTNEIETKEGLAGTSLDEMDLSRVLSIPNYWDRFTWKTSDVTNTVLWDNYVSPFKVKPYSATITDRFRCTHMGYVANAFTYWRGSIVYTFKFVKTQYHSGRLRISFIPYYYNTTISTGTPDVSRTQKIVVDLRTSTEVSFTVPYIASRPWLYCIRPESSWLSKDNKDGALMYNCVSGIVRVEVLNQLVAAQNVFSEIDVICEVSGGPDLEFAGPTCPSYVPYAGDLTLADTRKIEAERTQEYSNNEDNRITTQCSRIVAQVMGEDQQIPRNEAQHGVHPISIDTHRISNNWSPQAMCIGEKIVSIRQLIKRFGIFGDANTLQADGSSFVVAPFTVTSPTKTLTSTRNYTQFDYYYYLYAFWRGSMRIKMVAETQDGTGTPRKKTNFTWFVRMFNSLQDSFNSLISTSSSAVTTTVLPSGTINMGPSTQVIDPTVEGLIEVEVPYYNISHITPAVTIDDGTPSMEDYLKGHSPPCLLTFSPRDSISATNHHITASFMRAPGDDFSFMYLLEVPPLVNVARA.

The protein belongs to the picornaviruses polyprotein family. Post-translationally, specific enzymatic cleavages in vivo yield mature proteins.

It is found in the virion. The protein resides in the host cytoplasm. In terms of biological role, precursor of all the viral capsid proteins. Its function is as follows. Capsid protein 1, together with capsid proteins 2 and 3, form an icosahedral capsid protecting the viral RNA genome. The icosahedral capsid has a pseudo-T=3 symmetry with a diameter of approximately 300 Angstroms, and is composed of 60 copies of each CP1, CP2, and CP3. CP1 is situated at the 12 fivefold axes, whereas CP2 and CP3 are located at the quasi-sixfold axes. All these proteins contain a beta-sheet structure called beta-barrel jelly roll. Functionally, capsid protein 4 is a tstructural component of the icosahedral capsid protecting the genomic RNA. It may play an important role in capsid assembly. Capsid protein 2, together with capsid proteins 1 and 3, form an icosahedral capsid protecting the viral RNA genome. The icosahedral capsid has a pseudo-T=3 symmetry with a diameter of approximately 300 Angstroms, and is composed of 60 copies of each CP1, CP2, and CP3. CP1 is situated at the 12 fivefold axes, whereas CP2 and CP3 are located at the quasi-sixfold axes. All these proteins contain a beta-sheet structure called beta-barrel jelly roll. In terms of biological role, capsid protein 3, together with capsid proteins 1 and 2, form an icosahedral capsid protecting the viral RNA genome. The icosahedral capsid has a pseudo-T=3 symmetry with a diameter of approximately 300 Angstroms, and is composed of 60 copies of each CP1, CP2, and CP3. CP1 is situated at the 12 fivefold axes, whereas CP2 and CP3 are located at the quasi-sixfold axes. All these proteins contain a beta-sheet structure called beta-barrel jelly roll. The chain is Structural polyprotein from Cricket paralysis virus (isolate Teleogryllus commodus/Australia/CrPVVIC/1968) (CrPV).